A 316-amino-acid polypeptide reads, in one-letter code: DNA-directed RNA polymerase subunit alpha (316 aa).

An alpha N-terminal domain (alpha-NTD) region spans residues 1-233; that stretch reads MCMSQFPIEF…HWFNPLQTLE (233 aa). Residues 245-316 form an alpha C-terminal domain (alpha-CTD) region; it reads MAQLSNMLIE…LHCQLKKYVD (72 aa).

It belongs to the RNA polymerase alpha chain family. In plastids the minimal PEP RNA polymerase catalytic core is composed of four subunits: alpha, beta, beta', and beta''. When a (nuclear-encoded) sigma factor is associated with the core the holoenzyme is formed, which can initiate transcription.

It localises to the plastid. Its subcellular location is the chloroplast. The catalysed reaction is RNA(n) + a ribonucleoside 5'-triphosphate = RNA(n+1) + diphosphate. Its function is as follows. DNA-dependent RNA polymerase catalyzes the transcription of DNA into RNA using the four ribonucleoside triphosphates as substrates. This chain is DNA-directed RNA polymerase subunit alpha, found in Cyanidioschyzon merolae (strain NIES-3377 / 10D) (Unicellular red alga).